Here is a 297-residue protein sequence, read N- to C-terminus: Light-independent protochlorophyllide reductase iron-sulfur ATP-binding protein (297 aa).

ATP contacts are provided by residues 41–46 (GIGKST) and K70. S45 is a binding site for Mg(2+). [4Fe-4S] cluster is bound by residues C126 and C160. Residues 211–212 (NR) and 235–237 (PDL) each bind ATP.

Belongs to the NifH/BchL/ChlL family. As to quaternary structure, homodimer. Protochlorophyllide reductase is composed of three subunits; BchL, BchN and BchB. [4Fe-4S] cluster is required as a cofactor.

The catalysed reaction is chlorophyllide a + oxidized 2[4Fe-4S]-[ferredoxin] + 2 ADP + 2 phosphate = protochlorophyllide a + reduced 2[4Fe-4S]-[ferredoxin] + 2 ATP + 2 H2O. Its pathway is porphyrin-containing compound metabolism; bacteriochlorophyll biosynthesis (light-independent). In terms of biological role, component of the dark-operative protochlorophyllide reductase (DPOR) that uses Mg-ATP and reduced ferredoxin to reduce ring D of protochlorophyllide (Pchlide) to form chlorophyllide a (Chlide). This reaction is light-independent. The L component serves as a unique electron donor to the NB-component of the complex, and binds Mg-ATP. In Cereibacter sphaeroides (strain ATCC 17025 / ATH 2.4.3) (Rhodobacter sphaeroides), this protein is Light-independent protochlorophyllide reductase iron-sulfur ATP-binding protein.